We begin with the raw amino-acid sequence, 262 residues long: Pyridoxine 5'-phosphate synthase (262 aa).

Position 6 (N6) interacts with 3-amino-2-oxopropyl phosphate. 8–9 (DH) serves as a coordination point for 1-deoxy-D-xylulose 5-phosphate. R17 provides a ligand contact to 3-amino-2-oxopropyl phosphate. The Proton acceptor role is filled by H43. Positions 45 and 50 each coordinate 1-deoxy-D-xylulose 5-phosphate. E70 functions as the Proton acceptor in the catalytic mechanism. T102 is a 1-deoxy-D-xylulose 5-phosphate binding site. Residue H215 is the Proton donor of the active site. Residues G216 and 237-238 (GH) each bind 3-amino-2-oxopropyl phosphate.

The protein belongs to the PNP synthase family. As to quaternary structure, homooctamer; tetramer of dimers.

The protein localises to the cytoplasm. The enzyme catalyses 3-amino-2-oxopropyl phosphate + 1-deoxy-D-xylulose 5-phosphate = pyridoxine 5'-phosphate + phosphate + 2 H2O + H(+). It participates in cofactor biosynthesis; pyridoxine 5'-phosphate biosynthesis; pyridoxine 5'-phosphate from D-erythrose 4-phosphate: step 5/5. Functionally, catalyzes the complicated ring closure reaction between the two acyclic compounds 1-deoxy-D-xylulose-5-phosphate (DXP) and 3-amino-2-oxopropyl phosphate (1-amino-acetone-3-phosphate or AAP) to form pyridoxine 5'-phosphate (PNP) and inorganic phosphate. The polypeptide is Pyridoxine 5'-phosphate synthase (Helicobacter pylori (strain P12)).